Here is a 785-residue protein sequence, read N- to C-terminus: Probable cationic amino acid transporter (785 aa).

The next 15 helical transmembrane spans lie at 58–78, 83–103, 119–141, 187–207, 216–236, 251–271, 291–311, 337–357, 360–380, 384–404, 407–427, 568–588, 596–616, 628–648, and 655–675; these read LVSL…SGLV, AGPG…LSGV, AYTY…NLIL, YPDI…ALGV, VLNV…LFFV, WSGV…FDII, ASLV…TLMV, IVAI…LFPM, VIYA…VSTY, PAVA…LVSL, LIEM…VCVL, CVVL…FGSG, WAVL…FIII, MAPC…YLML, and WIRF…YGMW. Residues 715–785 are disordered; that stretch reads DQGPFQNWGK…VDDDLDDPLE (71 aa). Residues 727-740 show a composition bias toward low complexity; sequence QQKQPQQEQSEPQS. Residues 775-785 show a composition bias toward acidic residues; it reads VVDDDLDDPLE.

The protein belongs to the amino acid-polyamine-organocation (APC) superfamily.

Its subcellular location is the lysosome membrane. May be involved in arginine transport. This is Probable cationic amino acid transporter (slc7a14a) from Danio rerio (Zebrafish).